The chain runs to 467 residues: Plasma alpha-L-fucosidase (467 aa).

Positions 1 to 28 (MRPQELPRLAFPLLLLLLLLLPPPPCPA) are cleaved as a signal peptide. 2 N-linked (GlcNAc...) asparagine glycosylation sites follow: N171 and N239. S301 carries the phosphoserine; by FAM20C modification. The N-linked (GlcNAc...) asparagine glycan is linked to N377.

It belongs to the glycosyl hydrolase 29 family. In terms of assembly, homotetramer.

It is found in the secreted. The catalysed reaction is an alpha-L-fucoside + H2O = L-fucose + an alcohol. Functionally, alpha-L-fucosidase is responsible for hydrolyzing the alpha-1,6-linked fucose joined to the reducing-end N-acetylglucosamine of the carbohydrate moieties of glycoproteins. This Homo sapiens (Human) protein is Plasma alpha-L-fucosidase (FUCA2).